We begin with the raw amino-acid sequence, 582 residues long: NudC domain-containing protein 1 (582 aa).

Phosphoserine is present on serine 7. The 89-residue stretch at 272 to 360 folds into the CS domain; sequence KVEPLYYWQQ…NEGLMWPELV (89 aa). Serine 387 is modified (phosphoserine).

It localises to the cytoplasm. The protein resides in the nucleus. The chain is NudC domain-containing protein 1 from Mus musculus (Mouse).